We begin with the raw amino-acid sequence, 431 residues long: Enolase (431 aa).

Gln166 is a (2R)-2-phosphoglycerate binding site. Catalysis depends on Glu208, which acts as the Proton donor. Mg(2+)-binding residues include Asp245, Glu288, and Asp315. 4 residues coordinate (2R)-2-phosphoglycerate: Lys340, Arg369, Ser370, and Lys391. Residue Lys340 is the Proton acceptor of the active site.

It belongs to the enolase family. Mg(2+) serves as cofactor.

It localises to the cytoplasm. Its subcellular location is the secreted. The protein resides in the cell surface. It carries out the reaction (2R)-2-phosphoglycerate = phosphoenolpyruvate + H2O. It functions in the pathway carbohydrate degradation; glycolysis; pyruvate from D-glyceraldehyde 3-phosphate: step 4/5. Functionally, catalyzes the reversible conversion of 2-phosphoglycerate (2-PG) into phosphoenolpyruvate (PEP). It is essential for the degradation of carbohydrates via glycolysis. This is Enolase from Clostridium botulinum (strain Eklund 17B / Type B).